A 129-amino-acid chain; its full sequence is Large ribosomal subunit protein uL22 (129 aa).

It belongs to the universal ribosomal protein uL22 family. Part of the 50S ribosomal subunit.

This protein binds specifically to 23S rRNA; its binding is stimulated by other ribosomal proteins, e.g. L4, L17, and L20. It is important during the early stages of 50S assembly. It makes multiple contacts with different domains of the 23S rRNA in the assembled 50S subunit and ribosome. Functionally, the globular domain of the protein is located near the polypeptide exit tunnel on the outside of the subunit, while an extended beta-hairpin is found that lines the wall of the exit tunnel in the center of the 70S ribosome. This is Large ribosomal subunit protein uL22 from Aster yellows witches'-broom phytoplasma (strain AYWB).